The chain runs to 732 residues: Coagulation factor XIII A chain (732 aa).

The interval 1–27 is disordered; that stretch reads MSETSRTAFGGRRAVPPNNSNAAEDDL. Serine 2 bears the N-acetylserine mark. The propeptide at 2–38 is activation peptide; sequence SETSRTAFGGRRAVPPNNSNAAEDDLPTVELQGVVPR. Residues cysteine 315, histidine 374, and aspartate 397 contribute to the active site. Ca(2+)-binding residues include asparagine 437, aspartate 439, glutamate 486, and glutamate 491. Asparagine 614 is a glycosylation site (N-linked (GlcNAc...) asparagine).

The protein belongs to the transglutaminase superfamily. Transglutaminase family. In terms of assembly, tetramer of two A chains (F13A1) and two B (F13B) chains. Ca(2+) serves as cofactor. The activation peptide is released by thrombin.

The protein localises to the cytoplasm. It is found in the secreted. It carries out the reaction L-glutaminyl-[protein] + L-lysyl-[protein] = [protein]-L-lysyl-N(6)-5-L-glutamyl-[protein] + NH4(+). In terms of biological role, factor XIII is activated by thrombin and calcium ion to a transglutaminase that catalyzes the formation of gamma-glutamyl-epsilon-lysine cross-links between fibrin chains, thus stabilizing the fibrin clot. Also cross-link alpha-2-plasmin inhibitor, or fibronectin, to the alpha chains of fibrin. This Homo sapiens (Human) protein is Coagulation factor XIII A chain (F13A1).